Reading from the N-terminus, the 159-residue chain is Transcriptional repressor NrdR (159 aa).

The interval 1-21 is disordered; the sequence is MRCPKCQHNKSNVIDSRQAED. Residues 3 to 34 fold into a zinc finger; the sequence is CPKCQHNKSNVIDSRQAEDGNTIRRRRECDAC. An ATP-cone domain is found at 49 to 139; that stretch reads LLVVKKDGTR…VYRSFKDVDE (91 aa).

It belongs to the NrdR family. Zn(2+) is required as a cofactor.

In terms of biological role, negatively regulates transcription of bacterial ribonucleotide reductase nrd genes and operons by binding to NrdR-boxes. The chain is Transcriptional repressor NrdR from Streptococcus thermophilus (strain CNRZ 1066).